The primary structure comprises 354 residues: S-adenosylmethionine:tRNA ribosyltransferase-isomerase (354 aa).

The protein belongs to the QueA family. Monomer.

It localises to the cytoplasm. The catalysed reaction is 7-aminomethyl-7-carbaguanosine(34) in tRNA + S-adenosyl-L-methionine = epoxyqueuosine(34) in tRNA + adenine + L-methionine + 2 H(+). The protein operates within tRNA modification; tRNA-queuosine biosynthesis. In terms of biological role, transfers and isomerizes the ribose moiety from AdoMet to the 7-aminomethyl group of 7-deazaguanine (preQ1-tRNA) to give epoxyqueuosine (oQ-tRNA). The polypeptide is S-adenosylmethionine:tRNA ribosyltransferase-isomerase (Pseudomonas savastanoi pv. phaseolicola (strain 1448A / Race 6) (Pseudomonas syringae pv. phaseolicola (strain 1448A / Race 6))).